A 467-amino-acid polypeptide reads, in one-letter code: Methionine aminopeptidase 2-1 (467 aa).

Positions 1-10 (MGSKSPDGHR) are enriched in basic and acidic residues. The segment at 1 to 105 (MGSKSPDGHR…TPPRVSLPSI (105 aa)) is disordered. Acidic residues predominate over residues 43 to 55 (DGDDEDEDGDDDG). Positions 75 to 90 (KKRKRKSNKKKKKKTS) are enriched in basic residues. Residue His-219 coordinates substrate. Residues Asp-240, Asp-251, and His-320 each contribute to the a divalent metal cation site. Substrate is bound at residue His-328. Glu-353 and Glu-448 together coordinate a divalent metal cation.

Belongs to the peptidase M24A family. Methionine aminopeptidase eukaryotic type 2 subfamily. It depends on Co(2+) as a cofactor. The cofactor is Zn(2+). Mn(2+) serves as cofactor. Requires Fe(2+) as cofactor.

Its subcellular location is the cytoplasm. It catalyses the reaction Release of N-terminal amino acids, preferentially methionine, from peptides and arylamides.. Its function is as follows. Cotranslationally removes the N-terminal methionine from nascent proteins. The N-terminal methionine is often cleaved when the second residue in the primary sequence is small and uncharged (Met-Ala-, Cys, Gly, Pro, Ser, Thr, or Val). In Arthroderma gypseum (strain ATCC MYA-4604 / CBS 118893) (Microsporum gypseum), this protein is Methionine aminopeptidase 2-1.